Consider the following 211-residue polypeptide: MEIENSSDLIIDGLYSFLSAGVDEVGRGALFGPVVAAAVILPEDVLDDLASTGVTDSKKLTEKRRCHLASLIRTVAWDCQIGIASVREIDRLNILKASLLAMKRAVLRLKLRPDLVLVDGNQEIRDLFIPQRTVVKGDSKCLAIAAASIVAKVWRDTLIMRLAKKYPVYDLTKNKGYGTKKHKQGIINYGVSPQHRLSFSPCQPSLFEVRS.

The RNase H type-2 domain maps to 17-211 (FLSAGVDEVG…CQPSLFEVRS (195 aa)). D23, E24, and D119 together coordinate a divalent metal cation.

This sequence belongs to the RNase HII family. The cofactor is Mn(2+). Requires Mg(2+) as cofactor.

The protein resides in the cytoplasm. It carries out the reaction Endonucleolytic cleavage to 5'-phosphomonoester.. Its function is as follows. Endonuclease that specifically degrades the RNA of RNA-DNA hybrids. The chain is Ribonuclease HII from Trichodesmium erythraeum (strain IMS101).